The primary structure comprises 390 residues: Lipid-A-disaccharide synthase (390 aa).

The protein belongs to the LpxB family.

It carries out the reaction a lipid X + a UDP-2-N,3-O-bis[(3R)-3-hydroxyacyl]-alpha-D-glucosamine = a lipid A disaccharide + UDP + H(+). The protein operates within bacterial outer membrane biogenesis; LPS lipid A biosynthesis. In terms of biological role, condensation of UDP-2,3-diacylglucosamine and 2,3-diacylglucosamine-1-phosphate to form lipid A disaccharide, a precursor of lipid A, a phosphorylated glycolipid that anchors the lipopolysaccharide to the outer membrane of the cell. This chain is Lipid-A-disaccharide synthase, found in Paramagnetospirillum magneticum (strain ATCC 700264 / AMB-1) (Magnetospirillum magneticum).